The chain runs to 530 residues: MKSIIFNEIKKILECDFTLENPKDKNLAHFATPLAFSLAKELKKSPMLIASDLASKFQNHDCFESVEAVNGYLNFRISKTFLNELANQALANPNDFSKGEKKQESFLLEYVSANPTGPLHIGHARGAVFGDTLTRLARHLGYKFDTEYYVNDAGNQIYLLGLSILLSVKENILHENVEYPEQYYKGEYIADLAKEAFEKFGKEFFSEENIPSLADWAKDKMLILIKQNLEQAKIKIDSYVSERSYYDALNATLESLKEHKGIYEQEGKIWLASSQKGDEKDRVIIREDGRGTYLAADIVYHKDKMSRGYGKCINIWGADHHGYIPRMKAAMEFLGFDSNNLEIILAQMVSLLKDGEPYKMSKRAGNFILMSDVIDEIGSDALRYIFLSKKCDTHLEFDISDLQKEDSSNPVYYINYAHARIHQVFAKAGKKIDDVMRADLQSLNQDGVNLLFEALNLKAILNDAFEARALQKIPDYLKNLAANFHKFYNENKVVGSINENDLLKLFSLVALSIKTAFSLMGIEAKNKMEH.

The short motif at 113–123 (ANPTGPLHIGH) is the 'HIGH' region element.

This sequence belongs to the class-I aminoacyl-tRNA synthetase family. As to quaternary structure, monomer.

It localises to the cytoplasm. The enzyme catalyses tRNA(Arg) + L-arginine + ATP = L-arginyl-tRNA(Arg) + AMP + diphosphate. The polypeptide is Arginine--tRNA ligase (Campylobacter jejuni subsp. jejuni serotype O:6 (strain 81116 / NCTC 11828)).